A 335-amino-acid chain; its full sequence is Zinc transporter ZIP11 (335 aa).

Helical transmembrane passes span 12-32 (LLGT…VFIF), 44-64 (LGFA…APAV), 72-92 (GFGA…AAFV), 187-207 (IALL…AVGV), 256-278 (FWYG…FAVV), 283-300 (VLPY…YVVM), and 315-335 (LASW…VGLG).

It belongs to the ZIP transporter (TC 2.A.5) family.

The protein resides in the cell membrane. It localises to the nucleus. The protein localises to the cytoplasm. It is found in the golgi apparatus. The catalysed reaction is Zn(2+)(in) = Zn(2+)(out). It carries out the reaction Cu(2+)(in) = Cu(2+)(out). Its function is as follows. Zinc importer that regulates cytosolic zinc concentrations either via zinc influx from the extracellular compartment or efflux from intracellular organelles such as Golgi apparatus. May transport copper ions as well. The transport mechanism remains to be elucidated. The chain is Zinc transporter ZIP11 (Slc39a11) from Rattus norvegicus (Rat).